We begin with the raw amino-acid sequence, 102 residues long: Keratin-associated protein 25-1 (102 aa).

Belongs to the PMG family. As to quaternary structure, interacts with hair keratins.

In the hair cortex, hair keratin intermediate filaments are embedded in an interfilamentous matrix, consisting of hair keratin-associated proteins (KRTAP), which are essential for the formation of a rigid and resistant hair shaft through their extensive disulfide bond cross-linking with abundant cysteine residues of hair keratins. The matrix proteins include the high-sulfur and high-glycine-tyrosine keratins. This chain is Keratin-associated protein 25-1 (KRTAP25-1), found in Homo sapiens (Human).